The chain runs to 375 residues: Peptidyl-prolyl cis-trans isomerase D (375 aa).

The 163-residue stretch at 7-169 (YFDITIANEP…QEVTISSAGV (163 aa)) folds into the PPIase cyclophilin-type domain. 3 TPR repeats span residues 217-250 (AGKL…LDVH), 270-307 (LPLL…PNLS), and 312-345 (GKAL…VPGD).

This sequence belongs to the cyclophilin-type PPIase family. PPIase D subfamily.

The protein resides in the cytoplasm. It catalyses the reaction [protein]-peptidylproline (omega=180) = [protein]-peptidylproline (omega=0). Functionally, PPIases accelerate the folding of proteins. It catalyzes the cis-trans isomerization of proline imidic peptide bonds in oligopeptides. The chain is Peptidyl-prolyl cis-trans isomerase D (CPR6) from Cryptococcus neoformans var. neoformans serotype D (strain B-3501A) (Filobasidiella neoformans).